We begin with the raw amino-acid sequence, 118 residues long: Large ribosomal subunit protein bL19 (118 aa).

The protein belongs to the bacterial ribosomal protein bL19 family.

Functionally, this protein is located at the 30S-50S ribosomal subunit interface and may play a role in the structure and function of the aminoacyl-tRNA binding site. This is Large ribosomal subunit protein bL19 from Frankia alni (strain DSM 45986 / CECT 9034 / ACN14a).